The sequence spans 133 residues: Small ribosomal subunit protein uS8 (133 aa).

Belongs to the universal ribosomal protein uS8 family. In terms of assembly, part of the 30S ribosomal subunit. Contacts proteins S5 and S12.

In terms of biological role, one of the primary rRNA binding proteins, it binds directly to 16S rRNA central domain where it helps coordinate assembly of the platform of the 30S subunit. This chain is Small ribosomal subunit protein uS8, found in Prochlorococcus marinus (strain MIT 9303).